Consider the following 612-residue polypeptide: Proton pump-interactor 1 (612 aa).

The interval M1–V58 is disordered. The span at G20 to D35 shows a compositional bias: basic and acidic residues. Coiled coils occupy residues P90–V113 and L251–Y314. Basic and acidic residues-rich tracts occupy residues L374–P387, E434–A446, P459–A498, and A505–K519. The disordered stretch occupies residues L374 to G572. Residues V466–G526 are a coiled coil. Acidic residues predominate over residues T531–E545. Position 540 is a phosphoserine (S540). The segment covering Q549–I564 has biased composition (basic and acidic residues). The chain crosses the membrane as a helical span at residues V591–V611.

This sequence belongs to the plant Proton pump-interactor protein family. As to quaternary structure, interacts with AHA1 via N-terminal region. Strongly expressed in root and shoot vascular systems, particularly in meristematic and sink tissues. Also present in pollen, stigmas and siliques, but not in developing embryos.

Its subcellular location is the cell membrane. It is found in the endoplasmic reticulum membrane. In terms of biological role, promotes AHA1 plasma membrane ATPase activity by binding to a site different from the 14-3-3 binding site. The polypeptide is Proton pump-interactor 1 (PPI1) (Arabidopsis thaliana (Mouse-ear cress)).